A 1344-amino-acid polypeptide reads, in one-letter code: Myb-binding protein 1A (1344 aa).

Residues 1–24 are disordered; it reads MAEMKSPTKAEPATPAEAAQSDRH. Position 2 is an N-acetylalanine (Ala-2). The segment at 2–580 is interaction with MYB; it reads AEMKSPTKAE…WDQMMSTLKE (579 aa). The span at 7-19 shows a compositional bias: low complexity; it reads PTKAEPATPAEAA. Residues Lys-69 and Lys-156 each carry the N6-acetyllysine modification. 2 consecutive short sequence motifs (nuclear export signal) follow at residues 238–256 and 261–279; these read SEDN…ANSV and KLPN…ESRF. Disordered regions lie at residues 710 to 751 and 1146 to 1344; these read DEKQ…DKDV and QRPK…VQTP. A compositionally biased stretch (acidic residues) spans 732–747; that stretch reads SDMDSEDGEESEEEDR. Residues 1148–1159 are compositionally biased toward basic and acidic residues; that stretch reads PKSEKKNAKDIP. Lys-1149 is covalently cross-linked (Glycyl lysine isopeptide (Lys-Gly) (interchain with G-Cter in SUMO2)). The required for nuclear and nucleolar localization stretch occupies residues 1152 to 1344; it reads KKNAKDIPSD…RVASRRVQTP (193 aa). 2 positions are modified to phosphoserine: Ser-1160 and Ser-1164. Residues 1168 to 1185 show a composition bias toward basic residues; sequence TKRKKKGFLPETKKRKKL. Residue Ser-1187 is modified to Phosphoserine. Polar residues predominate over residues 1188 to 1202; sequence EGTTPEKNAASQQDA. Thr-1191 is subject to Phosphothreonine. A phosphoserine mark is found at Ser-1219 and Ser-1244. Polar residues predominate over residues 1249–1258; sequence NPTLSPSTPA. The residue at position 1251 (Thr-1251) is a Phosphothreonine. Ser-1253 carries the phosphoserine modification. Thr-1256 and Thr-1277 each carry phosphothreonine. Phosphoserine is present on residues Ser-1280, Ser-1303, and Ser-1318. The span at 1317–1329 shows a compositional bias: low complexity; that stretch reads LSLVSRSPSLLQS. Arg-1322 carries the citrulline modification. Residues Ser-1323, Ser-1325, and Ser-1329 each carry the phosphoserine modification.

This sequence belongs to the MYBBP1A family. Component of the B-WICH complex, at least composed of SMARCA5/SNF2H, BAZ1B/WSTF, SF3B1, DEK, MYO1C, ERCC6, MYBBP1A and DDX21. Binds to and represses JUN and MYB via the leucine zipper regions present in these proteins. Also binds to and represses PPARGC1A: this interaction is abrogated when PPARGC1A is phosphorylated by MAPK1/ERK. Binds to and stimulates transcription by AHR. Binds to KPNA2. Interacts with CLOCK and CRY1. In terms of processing, citrullinated by PADI4. As to expression, ubiquitously expressed.

The protein resides in the nucleus. The protein localises to the nucleolus. It localises to the cytoplasm. Its function is as follows. May activate or repress transcription via interactions with sequence specific DNA-binding proteins. Repression may be mediated at least in part by histone deacetylase activity (HDAC activity). Acts as a corepressor and in concert with CRY1, represses the transcription of the core circadian clock component PER2. Preferentially binds to dimethylated histone H3 'Lys-9' (H3K9me2) on the PER2 promoter. Has a role in rRNA biogenesis together with PWP1. The polypeptide is Myb-binding protein 1A (Mybbp1a) (Mus musculus (Mouse)).